Consider the following 87-residue polypeptide: U18-myrmicitoxin-Mri1a (87 aa).

The first 32 residues, 1 to 32 (MKNNYNRINTFIVYLMVTFSLISIISITECTP), serve as a signal peptide directing secretion. The EGF-like domain maps to 33–77 (NHDPCPPQYAEALCLNGGTCFSVTIMGSDNYNCICAPGFRGWRCQ). 3 disulfides stabilise this stretch: C37–C52, C46–C65, and C67–C76.

Post-translationally, O-glycosylated. In terms of tissue distribution, expressed by the venom gland.

It is found in the secreted. The protein is U18-myrmicitoxin-Mri1a of Manica rubida (European giant red ant).